The sequence spans 303 residues: Methionyl-tRNA formyltransferase (303 aa).

111-114 (SLLP) provides a ligand contact to (6S)-5,6,7,8-tetrahydrofolate.

Belongs to the Fmt family.

It catalyses the reaction L-methionyl-tRNA(fMet) + (6R)-10-formyltetrahydrofolate = N-formyl-L-methionyl-tRNA(fMet) + (6S)-5,6,7,8-tetrahydrofolate + H(+). Attaches a formyl group to the free amino group of methionyl-tRNA(fMet). The formyl group appears to play a dual role in the initiator identity of N-formylmethionyl-tRNA by promoting its recognition by IF2 and preventing the misappropriation of this tRNA by the elongation apparatus. The protein is Methionyl-tRNA formyltransferase of Ehrlichia canis (strain Jake).